The chain runs to 341 residues: UDP-3-O-(3-hydroxymyristoyl)glucosamine N-acyltransferase (341 aa).

The active-site Proton acceptor is histidine 239.

Belongs to the transferase hexapeptide repeat family. LpxD subfamily. Homotrimer.

It catalyses the reaction a UDP-3-O-[(3R)-3-hydroxyacyl]-alpha-D-glucosamine + a (3R)-hydroxyacyl-[ACP] = a UDP-2-N,3-O-bis[(3R)-3-hydroxyacyl]-alpha-D-glucosamine + holo-[ACP] + H(+). The enzyme catalyses UDP-3-O-[(3R)-3-hydroxytetradecanoyl]-alpha-D-glucosamine + (3R)-hydroxytetradecanoyl-[ACP] = UDP-2-N,3-O-bis[(3R)-3-hydroxytetradecanoyl]-alpha-D-glucosamine + holo-[ACP] + H(+). It functions in the pathway glycolipid biosynthesis; lipid IV(A) biosynthesis; lipid IV(A) from (3R)-3-hydroxytetradecanoyl-[acyl-carrier-protein] and UDP-N-acetyl-alpha-D-glucosamine: step 3/6. Catalyzes the N-acylation of UDP-3-O-(hydroxytetradecanoyl)glucosamine using 3-hydroxytetradecanoyl-ACP as the acyl donor. Is involved in the biosynthesis of lipid A, a phosphorylated glycolipid that anchors the lipopolysaccharide to the outer membrane of the cell. The chain is UDP-3-O-(3-hydroxymyristoyl)glucosamine N-acyltransferase from Salmonella choleraesuis (strain SC-B67).